Here is a 380-residue protein sequence, read N- to C-terminus: Cytochrome b (380 aa).

Transmembrane regions (helical) follow at residues 34-54 (FGSL…FLAM), 78-99 (WLLR…YFHI), 114-134 (WNIG…GYVL), and 179-199 (FFTF…INLL). The heme b site is built by His-84 and His-98. His-183 lines the heme b pocket. His-202 serves as a coordination point for a ubiquinone. Transmembrane regions (helical) follow at residues 227–247 (YKDL…STFA), 289–309 (LGGV…PIIH), 321–341 (IAKT…WIGG), and 348–368 (FITI…LLIP).

Belongs to the cytochrome b family. As to quaternary structure, the cytochrome bc1 complex contains 3 respiratory subunits (MT-CYB, CYC1 and UQCRFS1), 2 core proteins (UQCRC1 and UQCRC2) and probably 6 low-molecular weight proteins. Requires heme b as cofactor.

It is found in the mitochondrion inner membrane. In terms of biological role, component of the ubiquinol-cytochrome c reductase complex (complex III or cytochrome b-c1 complex) that is part of the mitochondrial respiratory chain. The b-c1 complex mediates electron transfer from ubiquinol to cytochrome c. Contributes to the generation of a proton gradient across the mitochondrial membrane that is then used for ATP synthesis. The polypeptide is Cytochrome b (mt-cyb) (Pelophylax plancyi (Korean pond frog)).